The primary structure comprises 343 residues: Ribosomal RNA small subunit methyltransferase C (343 aa).

The protein belongs to the methyltransferase superfamily. RsmC family. Monomer.

It localises to the cytoplasm. The catalysed reaction is guanosine(1207) in 16S rRNA + S-adenosyl-L-methionine = N(2)-methylguanosine(1207) in 16S rRNA + S-adenosyl-L-homocysteine + H(+). In terms of biological role, specifically methylates the guanine in position 1207 of 16S rRNA in the 30S particle. This chain is Ribosomal RNA small subunit methyltransferase C, found in Shigella sonnei (strain Ss046).